A 138-amino-acid chain; its full sequence is Mediator of RNA polymerase II transcription subunit 19 (138 aa).

The protein belongs to the Mediator complex subunit 19 family. Component of the Mediator complex.

The protein resides in the nucleus. Functionally, component of the Mediator complex, a coactivator involved in the regulated transcription of nearly all RNA polymerase II-dependent genes. Mediator functions as a bridge to convey information from gene-specific regulatory proteins to the basal RNA polymerase II transcription machinery. Mediator is recruited to promoters by direct interactions with regulatory proteins and serves as a scaffold for the assembly of a functional preinitiation complex with RNA polymerase II and the general transcription factors. This is Mediator of RNA polymerase II transcription subunit 19 (med19) from Schizosaccharomyces pombe (strain 972 / ATCC 24843) (Fission yeast).